The sequence spans 157 residues: Myosin regulatory light chain, striated adductor muscle (157 aa).

2 consecutive EF-hand domains span residues 16-51 and 85-120; these read KQIQ…LGRA and DSEE…MGDN. Ca(2+) contacts are provided by aspartate 29, aspartate 31, aspartate 33, and aspartate 40.

In molluscan muscle, calcium regulation is associated with myosin rather than with actin. Muscle myosin contains two types of light chains: the catalytic light chain, essential for ATPase activity, and the regulatory light chain, a calcium-binding protein responsible for Ca(2+) dependent binding and Ca(2+) dependent Mg-ATPase activity. In Argopecten irradians (Bay scallop), this protein is Myosin regulatory light chain, striated adductor muscle.